The following is a 449-amino-acid chain: Phosphoglucosamine mutase (449 aa).

The Phosphoserine intermediate role is filled by Ser101. Ser101, Asp242, Asp244, and Asp246 together coordinate Mg(2+). Ser101 carries the post-translational modification Phosphoserine.

The protein belongs to the phosphohexose mutase family. Requires Mg(2+) as cofactor. Activated by phosphorylation.

The catalysed reaction is alpha-D-glucosamine 1-phosphate = D-glucosamine 6-phosphate. In terms of biological role, catalyzes the conversion of glucosamine-6-phosphate to glucosamine-1-phosphate. The polypeptide is Phosphoglucosamine mutase (Hyphomonas neptunium (strain ATCC 15444)).